The chain runs to 383 residues: Envelope glycoprotein D (383 aa).

Residues 1–30 (MPAATMATPGYLACRTSVATLLFFVLLRRA) form the signal peptide. Topologically, residues 31–358 (AILGAGGAPS…PKVVGPTVGP (328 aa)) are virion surface. 3 disulfides stabilise this stretch: Cys76-Cys197, Cys115-Cys212, and Cys127-Cys136. The interval 244–311 (YQDKLKVASP…TSASGVIEIE (68 aa)) is profusion. Positions 315-349 (ESDVRLVSYPPPTLPSPGPGGNENGAGYSDNRPDP) are disordered. The segment covering 323–332 (YPPPTLPSPG) has biased composition (pro residues). Residues 359–379 (GAIILVVMCAPILIGLTAFTI) traverse the membrane as a helical segment. Residues 380–383 (RKYC) lie on the Intravirion side of the membrane.

The protein belongs to the herpesviridae glycoprotein D family.

The protein resides in the virion membrane. Its function is as follows. Envelope glycoprotein that binds to host cell entry receptors, promoting the virus entry into host cells. May trigger fusion with host membrane, by recruiting the fusion machinery composed of gB and gH/gL. The polypeptide is Envelope glycoprotein D (US6) (Amazona oratrix (yellow-headed parrot)).